The sequence spans 107 residues: Putative nucleosome assembly protein 1-like 6 (107 aa).

The protein belongs to the nucleosome assembly protein (NAP) family.

This Homo sapiens (Human) protein is Putative nucleosome assembly protein 1-like 6.